The chain runs to 502 residues: Type II secretion system protein E (502 aa).

Residue 263-270 (GPTGSGKT) participates in ATP binding. 4 residues coordinate Zn(2+): Cys-396, Cys-399, Cys-429, and Cys-432. The segment at 461 to 480 (SSEQEMTRHARTSGPSIRDD) is disordered.

It belongs to the GSP E family. In terms of assembly, homodimer. Dimerization is directed by a relatively short domain near the extreme N-terminus and is essential for extracellular protein secretion. May form homooligomers. Interacts with XcpY/GspL. Forms an inner membrane platform subcomplex with XcpS/GspF, XcpY/GspL and XcpZ/GspM. Zn(2+) is required as a cofactor.

It localises to the cell inner membrane. It catalyses the reaction ATP + H2O + cellular proteinSide 1 = ADP + phosphate + cellular proteinSide 2.. In terms of biological role, ATPase component of the type II secretion system required for the energy-dependent secretion of extracellular factors such as proteases and toxins from the periplasm. Acts as a molecular motor to provide the energy that is required for assembly of the pseudopilus and the extrusion of substrates generated in the cytoplasm. This Pseudomonas aeruginosa (strain ATCC 15692 / DSM 22644 / CIP 104116 / JCM 14847 / LMG 12228 / 1C / PRS 101 / PAO1) protein is Type II secretion system protein E (xcpR).